Reading from the N-terminus, the 219-residue chain is Claudin-3 (219 aa).

The Cytoplasmic portion of the chain corresponds to 1 to 8 (MSMGLEIT). A helical membrane pass occupies residues 9–29 (GTSLAVLGWLCTIVCCALPMW). At 30-80 (RVSAFIGSSIITAQITWEGLWMNCVVQSTGQMQCKMYDSLLALPQDLQAAR) the chain is on the extracellular side. The helical transmembrane segment at 81 to 101 (ALIVVSILLAAFGLLVALVGA) threads the bilayer. Topologically, residues 102–115 (QCTNCVQDETAKAK) are cytoplasmic. A helical transmembrane segment spans residues 116–136 (ITIVAGVLFLLAAVLTLVPVS). Residues 137-161 (WSANTIIRDFYNPLVPEAQKREMGT) are Extracellular-facing. Residues 162–182 (GLYVGWAAAALQLLGGALLCC) traverse the membrane as a helical segment. Residues 183-219 (SCPPREKYAPTKILYSAPRSTGPGTGTGTAYDRKDYV) are Cytoplasmic-facing. Position 197 is a phosphotyrosine (Tyr-197). Ser-198 carries the post-translational modification Phosphoserine. Residues 218–219 (YV) form an interactions with TJP1, TJP2 and TJP3 region.

Belongs to the claudin family. In terms of assembly, can form homo- and heteropolymers with other CLDN. Homopolymers interact with CLDN1 and CLDN2 homopolymers. Interacts in cis (within the same plasma membrane) with CLDN19. Directly interacts with TJP1/ZO-1, TJP2/ZO-2 and TJP3/ZO-3.

It localises to the cell junction. It is found in the tight junction. The protein resides in the cell membrane. Plays a major role in tight junction-specific obliteration of the intercellular space, through calcium-independent cell-adhesion activity. In Rattus norvegicus (Rat), this protein is Claudin-3 (Cldn3).